A 307-amino-acid polypeptide reads, in one-letter code: Small ribosomal subunit biogenesis GTPase RsgA (307 aa).

In terms of domain architecture, CP-type G spans 80-237 (KADLRQTIVS…IVDTPGIKEF (158 aa)). Residues 129 to 132 (NKID) and 180 to 188 (GQSGVGKSS) each bind GTP. Cys-261, Cys-266, His-268, and Cys-274 together coordinate Zn(2+).

The protein belongs to the TRAFAC class YlqF/YawG GTPase family. RsgA subfamily. In terms of assembly, monomer. Associates with 30S ribosomal subunit, binds 16S rRNA. Zn(2+) is required as a cofactor.

Its subcellular location is the cytoplasm. Functionally, one of several proteins that assist in the late maturation steps of the functional core of the 30S ribosomal subunit. Helps release RbfA from mature subunits. May play a role in the assembly of ribosomal proteins into the subunit. Circularly permuted GTPase that catalyzes slow GTP hydrolysis, GTPase activity is stimulated by the 30S ribosomal subunit. The protein is Small ribosomal subunit biogenesis GTPase RsgA of Borreliella afzelii (strain PKo) (Borrelia afzelii).